A 154-amino-acid polypeptide reads, in one-letter code: Protein AE7-like 1 (154 aa).

The protein belongs to the MIP18 family.

May play a role in chromosome segregation through establishment of sister chromatid cohesion. Unable to complement ae7 mutants, and thus probably not involved in the cytosolic iron-sulfur assembly (CIA) pathway. This chain is Protein AE7-like 1, found in Arabidopsis thaliana (Mouse-ear cress).